A 371-amino-acid polypeptide reads, in one-letter code: MVTPVSISNYISLPDDFPVRNIAPQVKEVLKDFIDALSTIICNEEWRTSLNINSATKKIFNNLDNLSYIQRTSFRGNDTLYNEKVQFKLTYPARNGRHKENIEFQVVINLSPIYLDNFRHDGEINIFCAPNPKPVTMGRVFQTGVERVLFLFLNDFIEQFPMINPGVPIKRAHTPHIEPLPSDHHTAADYLRQFDLLVLNFISRGNFVILPRLWNNSEVHRWFVNKDPNLITAILDITDSELKEDLLQSLMDSLGSNKHVLPEVCICFLSLLAEQESPHFQNLFLFFANMLLHYHQFMNPNESDLNDVLMPASLSDDKIIKHMARRTLKLFVKNETPPKVTHEDLVKNRPRSPVRPPIPATAKTPDLPERH.

Positions 339-371 are disordered; it reads KVTHEDLVKNRPRSPVRPPIPATAKTPDLPERH.

This is an uncharacterized protein from Escherichia coli (strain K12).